A 1010-amino-acid chain; its full sequence is Peroxisome proliferator-activated receptor gamma coactivator 1-beta (1010 aa).

Residues 1 to 91 (MAGNDCGALL…FFQIDSENEA (91 aa)) are abolishes DNA transcriptional activity when missing. Residues 115-134 (GLDEGDTPSCTPASPAPLSV) form a disordered region. An LXXLL motif 1 motif is present at residues 140-144 (LERLL). 2 positions are modified to phosphoserine: S145 and S148. Positions 156–160 (LQKLL) match the LXXLL motif 2 motif. Disordered regions lie at residues 165-214 (SPTA…RPCT), 227-282 (PRGK…QVPK), and 306-329 (PQRASEPIPQSCSSPLRKVPPRSR). Polar residues-rich tracts occupy residues 178–189 (TWSQTSLSSRSQ) and 264–279 (PQDSLGQDTANPNSAQ). The LXXLL motif 3 motif lies at 342-346 (LRELL). Residues 369–384 (TPQSRTRPPKDSQASP) are compositionally biased toward polar residues. Disordered regions lie at residues 369–475 (TPQS…VCPV), 517–567 (GLTD…CLML), and 590–674 (GTAG…QKRP). S383 bears the Phosphoserine mark. Residues 411-428 (LRLEVKRDVNKPARQKRE) are compositionally biased toward basic and acidic residues. Acidic residues predominate over residues 429–449 (EDEEEEEEEEEEEEKEDEEEE). Over residues 521 to 532 (SSQGQQLPLGSQ) the composition is skewed to low complexity. Over residues 604-618 (PMEEDPFKQDTKHSP) the composition is skewed to basic and acidic residues. Polar residues-rich tracts occupy residues 619–638 (GQDTAPSLPSPETLQLTATP) and 659–670 (QHATTQPVSQAG). Phosphoserine is present on S628. Residues 681 to 684 (DHDY) carry the HCFC1-binding-motif (HBM) motif. 2 disordered regions span residues 714-744 (HQGATLPVETKTPRREADQNCDPTPKDSMQL) and 778-881 (DTVF…KKRR). Residues 782–794 (EDSSSSSGESSFL) show a composition bias toward low complexity. Over residues 795-811 (LEEEEEEGGEEDDEGED) the composition is skewed to acidic residues. The segment covering 832–852 (SRQLCSRSRSSSGSSSCSSWS) has biased composition (low complexity). In terms of domain architecture, RRM spans 889-963 (RVVYIRNLSG…RNEPSFHLSY (75 aa)).

As to quaternary structure, interacts with estrogen receptor alpha/ESR1. Interacts with Sterol regulatory binding transcription factor 1/SREBF1, PPAR-alpha/PPARA, thyroid hormone receptor beta/THRB and host cell factor/HCFC1. Interacts with Estrogen-related receptor gamma/ESRRG and alpha/ESRRA. Interacts with PRDM16. In terms of tissue distribution, ubiquitous with higher expression in heart, brown adipose tissue.

It is found in the nucleus. In terms of biological role, plays a role of stimulator of transcription factors and nuclear receptors activities. Activates transcriptional activity of estrogen receptor alpha, nuclear respiratory factor 1 (NRF1) and glucocorticoid receptor in the presence of glucocorticoids. May play a role in constitutive non-adrenergic-mediated mitochondrial biogenesis as suggested by increased basal oxygen consumption and mitochondrial number when overexpressed. May be part of the pathways regulating the elevation of gluconeogenesis, beta-oxidation of fatty acids and ketogenesis during fasting. Stimulates SREBP-mediated lipogenic gene expression in the liver. Induces energy expenditure and antagonizes obesity when overexpressed. Also induces the expression of mitochondrial genes involved in oxidative metabolism. Induces the expression of PERM1 in the skeletal muscle in an ESRRA-dependent manner. In Rattus norvegicus (Rat), this protein is Peroxisome proliferator-activated receptor gamma coactivator 1-beta (Ppargc1b).